The following is a 438-amino-acid chain: Trigger factor (438 aa).

The region spanning 162-247 (GDRVNINYQG…LNKVEAPKLP (86 aa)) is the PPIase FKBP-type domain.

Belongs to the FKBP-type PPIase family. Tig subfamily.

The protein resides in the cytoplasm. The enzyme catalyses [protein]-peptidylproline (omega=180) = [protein]-peptidylproline (omega=0). Functionally, involved in protein export. Acts as a chaperone by maintaining the newly synthesized protein in an open conformation. Functions as a peptidyl-prolyl cis-trans isomerase. This Nitrosomonas eutropha (strain DSM 101675 / C91 / Nm57) protein is Trigger factor.